The following is a 595-amino-acid chain: DNA polymerase (595 aa).

A 3'-5' exonuclease domain is found at Met1–Asp212. The tract at residues Val213–Tyr595 is polymerase.

Belongs to the DNA polymerase type-A family.

It carries out the reaction DNA(n) + a 2'-deoxyribonucleoside 5'-triphosphate = DNA(n+1) + diphosphate. Replicates viral genomic DNA. This polymerase possesses two enzymatic activities: DNA synthesis (polymerase) and an exonucleolytic activity that degrades single-stranded DNA in the 3'-5' direction. The protein is DNA polymerase (44) of Mycobacterium phage L5 (Mycobacteriophage L5).